The chain runs to 567 residues: 2-succinyl-5-enolpyruvyl-6-hydroxy-3-cyclohexene-1-carboxylate synthase (567 aa).

This sequence belongs to the TPP enzyme family. MenD subfamily. Homodimer. It depends on Mg(2+) as a cofactor. Requires Mn(2+) as cofactor. Thiamine diphosphate is required as a cofactor.

It carries out the reaction isochorismate + 2-oxoglutarate + H(+) = 5-enolpyruvoyl-6-hydroxy-2-succinyl-cyclohex-3-ene-1-carboxylate + CO2. It functions in the pathway quinol/quinone metabolism; 1,4-dihydroxy-2-naphthoate biosynthesis; 1,4-dihydroxy-2-naphthoate from chorismate: step 2/7. The protein operates within quinol/quinone metabolism; menaquinone biosynthesis. In terms of biological role, catalyzes the thiamine diphosphate-dependent decarboxylation of 2-oxoglutarate and the subsequent addition of the resulting succinic semialdehyde-thiamine pyrophosphate anion to isochorismate to yield 2-succinyl-5-enolpyruvyl-6-hydroxy-3-cyclohexene-1-carboxylate (SEPHCHC). The polypeptide is 2-succinyl-5-enolpyruvyl-6-hydroxy-3-cyclohexene-1-carboxylate synthase (Yersinia pseudotuberculosis serotype IB (strain PB1/+)).